The primary structure comprises 124 residues: Small ribosomal subunit protein uS12 (124 aa).

The segment at 1-32 (MPTIQQLVRKGRQDKVSKNKTPALKGSPQRRG) is disordered. 3-methylthioaspartic acid is present on Asp-89.

Belongs to the universal ribosomal protein uS12 family. In terms of assembly, part of the 30S ribosomal subunit. Contacts proteins S8 and S17. May interact with IF1 in the 30S initiation complex.

In terms of biological role, with S4 and S5 plays an important role in translational accuracy. Its function is as follows. Interacts with and stabilizes bases of the 16S rRNA that are involved in tRNA selection in the A site and with the mRNA backbone. Located at the interface of the 30S and 50S subunits, it traverses the body of the 30S subunit contacting proteins on the other side and probably holding the rRNA structure together. The combined cluster of proteins S8, S12 and S17 appears to hold together the shoulder and platform of the 30S subunit. This chain is Small ribosomal subunit protein uS12, found in Nocardioides sp. (strain ATCC BAA-499 / JS614).